The following is a 190-amino-acid chain: Dense granule protein 1 (190 aa).

The signal sequence occupies residues 1 to 24; it reads MVRVSAIVGAAASVFVCLSAGAYA. N-linked (GlcNAc...) asparagine glycosylation occurs at N30.

Its subcellular location is the secreted. The sequence is that of Dense granule protein 1 (GRA1) from Toxoplasma gondii.